Reading from the N-terminus, the 777-residue chain is MFSLKPPKPTFRSYLLPPPQTDDKINSEPKIKKLEPVLLPGEIVVNEVNFVRKCIATDTSQYDLWGKLICSNFKISFITDDPMPLQKFHYRNLLLGEHDVPLTCIEQIVTVNDHKRKQKVLGPNQKLKFNPTELIIYCKDFRIVRFRFDESGPESAKKVCLAIAHYSQPTDLQLLFAFEYVGKKYHNSANKINGIPSGDGGGGGGGGNGAGGGSSQKTPLFETYSDWDREIKRTGASGWRVCSINEGYMISTCLPEYIVVPSSLADQDLKIFSHSFVGRRMPLWCWSHSNGSALVRMALIKDVLQQRKIDQRICNAITKSHPQRSDVYKSDLDKTLPNIQEVQAAFVKLKQLCVNEPFEETEEKWLSSLENTRWLEYVRAFLKHSAELVYMLESKHLSVVLQEEEGRDLSCCVASLVQVMLDPYFRTITGFQSLIQKEWVMAGYQFLDRCNHLKRSEKESPLFLLFLDATWQLLEQYPAAFEFSETYLAVLYDSTRISLFGTFLFNSPHQRVKQSTEFAISKNIQLGDEKGLKFPSVWDWSLQFTAKDRTLFHNPFYIGKSTPCIQNGSVKSFKRTKKSYSSTLRGMPSALKNGIISDQELLPRRNSLILKPKPDPAQQTDSQNSDTEQYFREWFSKPANLHGVILPRVSGTHIKLWKLCYFRWVPEAQISLGGSITAFHKLSLLADEVDVLSRMLRQQRSGPLEACYGELGQSRMYFNASGPHHTDTSGTPEFLSSSFPFSPVGNLCRRSILGTPLSKFLSGAKIWLSTETLANED.

Residues 196–217 are disordered; that stretch reads PSGDGGGGGGGGNGAGGGSSQK. A compositionally biased stretch (gly residues) spans 197-214; sequence SGDGGGGGGGGNGAGGGS. In terms of domain architecture, Myotubularin phosphatase spans 221-661; that stretch reads FETYSDWDRE…THIKLWKLCY (441 aa). A phosphoserine mark is found at Ser607 and Ser751.

This sequence belongs to the protein-tyrosine phosphatase family. Non-receptor class myotubularin subfamily.

This chain is Myotubularin-related protein 10 (MTMR10), found in Homo sapiens (Human).